Consider the following 152-residue polypeptide: SKP1-like protein 11 (152 aa).

Residues 94-152 (ILAANYLNIKSLLDLTCQTVADMIKGKTPEEIRSTFNIENDFTPEEEEAVRKENQWAFE) form an interaction with the F-box domain of F-box proteins region.

It belongs to the SKP1 family. In terms of assembly, part of a SCF (SKP1-cullin-F-box) protein ligase complex. Interacts with ADO3/FKF1, COI1/FBL2, EBF1/FBL6, PP2A13, PP2B10, UFO, SKIP2, SKIP15, SKIP16, SKIP32, CPR1/CPR30, At1g55000, At1g67340, At1g78100, At3g04660, At3g16740, At3g61590, At4g38940 and At5g49610. In terms of tissue distribution, expressed in young seedlings, cotyledons, roots, leaves, floral stems, inflorescences, pollen, and siliques, with a slightly higher level in inflorescence than in other tissues.

The protein localises to the nucleus. It participates in protein modification; protein ubiquitination. In terms of biological role, involved in ubiquitination and subsequent proteasomal degradation of target proteins. Together with CUL1, RBX1 and a F-box protein, it forms a SCF E3 ubiquitin ligase complex. The functional specificity of this complex depends on the type of F-box protein. In the SCF complex, it serves as an adapter that links the F-box protein to CUL1. Plays a role during early flowers reproductive development. This Arabidopsis thaliana (Mouse-ear cress) protein is SKP1-like protein 11 (ASK11).